We begin with the raw amino-acid sequence, 201 residues long: Imidazole glycerol phosphate synthase subunit HisH (201 aa).

Residues 1 to 201 (MVFIADYGAG…LKVLANFAEL (201 aa)) enclose the Glutamine amidotransferase type-1 domain. The active-site Nucleophile is the Cys79. Residues His183 and Glu185 contribute to the active site.

In terms of assembly, heterodimer of HisH and HisF.

It is found in the cytoplasm. It carries out the reaction 5-[(5-phospho-1-deoxy-D-ribulos-1-ylimino)methylamino]-1-(5-phospho-beta-D-ribosyl)imidazole-4-carboxamide + L-glutamine = D-erythro-1-(imidazol-4-yl)glycerol 3-phosphate + 5-amino-1-(5-phospho-beta-D-ribosyl)imidazole-4-carboxamide + L-glutamate + H(+). The enzyme catalyses L-glutamine + H2O = L-glutamate + NH4(+). Its pathway is amino-acid biosynthesis; L-histidine biosynthesis; L-histidine from 5-phospho-alpha-D-ribose 1-diphosphate: step 5/9. IGPS catalyzes the conversion of PRFAR and glutamine to IGP, AICAR and glutamate. The HisH subunit catalyzes the hydrolysis of glutamine to glutamate and ammonia as part of the synthesis of IGP and AICAR. The resulting ammonia molecule is channeled to the active site of HisF. The protein is Imidazole glycerol phosphate synthase subunit HisH of Chlorobium chlorochromatii (strain CaD3).